The sequence spans 525 residues: GMP synthase [glutamine-hydrolyzing] (525 aa).

One can recognise a Glutamine amidotransferase type-1 domain in the interval 8 to 207 (KILILDFGSQ…AVAICGCGTN (200 aa)). Cys85 functions as the Nucleophile in the catalytic mechanism. Residues His181 and Glu183 contribute to the active site. Residues 208-400 (WKPSSIIEDA…LGLPYNMLYR (193 aa)) enclose the GMPS ATP-PPase domain. ATP is bound at residue 235-241 (SGGVDSS).

In terms of assembly, homodimer.

It catalyses the reaction XMP + L-glutamine + ATP + H2O = GMP + L-glutamate + AMP + diphosphate + 2 H(+). Its pathway is purine metabolism; GMP biosynthesis; GMP from XMP (L-Gln route): step 1/1. Its function is as follows. Catalyzes the synthesis of GMP from XMP. The protein is GMP synthase [glutamine-hydrolyzing] of Shewanella denitrificans (strain OS217 / ATCC BAA-1090 / DSM 15013).